The chain runs to 222 residues: Triosephosphate isomerase (222 aa).

9–11 (NYK) contacts substrate. His93 functions as the Electrophile in the catalytic mechanism. Residue Glu141 is the Proton acceptor of the active site. Substrate-binding positions include Ile146, Gly181, and 202–203 (AS).

It belongs to the triosephosphate isomerase family. In terms of assembly, homotetramer; dimer of dimers.

It localises to the cytoplasm. The enzyme catalyses D-glyceraldehyde 3-phosphate = dihydroxyacetone phosphate. The protein operates within carbohydrate biosynthesis; gluconeogenesis. It functions in the pathway carbohydrate degradation; glycolysis; D-glyceraldehyde 3-phosphate from glycerone phosphate: step 1/1. Its function is as follows. Involved in the gluconeogenesis. Catalyzes stereospecifically the conversion of dihydroxyacetone phosphate (DHAP) to D-glyceraldehyde-3-phosphate (G3P). This is Triosephosphate isomerase from Methanosarcina mazei (strain ATCC BAA-159 / DSM 3647 / Goe1 / Go1 / JCM 11833 / OCM 88) (Methanosarcina frisia).